The following is a 340-amino-acid chain: Glyceraldehyde-3-phosphate dehydrogenase (340 aa).

NAD(+) is bound by residues 11–12 and G111; that span reads SI. Residue 140–142 participates in D-glyceraldehyde 3-phosphate binding; that stretch reads SCN. C141 (nucleophile) is an active-site residue. Position 169 (R169) interacts with NAD(+). A D-glyceraldehyde 3-phosphate-binding site is contributed by 195-196; it reads HG. Q303 is an NAD(+) binding site.

This sequence belongs to the glyceraldehyde-3-phosphate dehydrogenase family. Homotetramer.

The protein localises to the cytoplasm. The enzyme catalyses D-glyceraldehyde 3-phosphate + phosphate + NADP(+) = (2R)-3-phospho-glyceroyl phosphate + NADPH + H(+). The catalysed reaction is D-glyceraldehyde 3-phosphate + phosphate + NAD(+) = (2R)-3-phospho-glyceroyl phosphate + NADH + H(+). It functions in the pathway carbohydrate degradation; glycolysis; pyruvate from D-glyceraldehyde 3-phosphate: step 1/5. The chain is Glyceraldehyde-3-phosphate dehydrogenase from Methanococcus maripaludis (strain C5 / ATCC BAA-1333).